Here is a 597-residue protein sequence, read N- to C-terminus: Glutamine--fructose-6-phosphate aminotransferase [isomerizing] (597 aa).

The active-site Nucleophile; for GATase activity is cysteine 2. The Glutamine amidotransferase type-2 domain occupies 2 to 218 (CGIVGYIGDS…ENSVGQISLE (217 aa)). SIS domains lie at 276-416 (IDPE…QLGT) and 449-587 (LSKR…VDHP). Lysine 592 serves as the catalytic For Fru-6P isomerization activity.

Homodimer.

It is found in the cytoplasm. It carries out the reaction D-fructose 6-phosphate + L-glutamine = D-glucosamine 6-phosphate + L-glutamate. In terms of biological role, catalyzes the first step in hexosamine metabolism, converting fructose-6P into glucosamine-6P using glutamine as a nitrogen source. This is Glutamine--fructose-6-phosphate aminotransferase [isomerizing] from Helicobacter pylori (strain J99 / ATCC 700824) (Campylobacter pylori J99).